The chain runs to 405 residues: Cytoplasmic tRNA 2-thiolation protein 2 (405 aa).

This sequence belongs to the CTU2/NCS2 family.

Its subcellular location is the cytoplasm. It functions in the pathway tRNA modification; 5-methoxycarbonylmethyl-2-thiouridine-tRNA biosynthesis. Its function is as follows. Plays a central role in 2-thiolation of mcm(5)S(2)U at tRNA wobble positions of tRNA(Lys), tRNA(Glu) and tRNA(Gln). May act by forming a heterodimer with NCS6/CTU1 that ligates sulfur from thiocarboxylated URM1 onto the uridine of tRNAs at wobble position. The sequence is that of Cytoplasmic tRNA 2-thiolation protein 2 from Drosophila pseudoobscura pseudoobscura (Fruit fly).